Reading from the N-terminus, the 4485-residue chain is Dynein gamma chain, flagellar outer arm (4485 aa).

The stem stretch occupies residues 1–1780 (MALDNRHRLI…IISICDVDFE (1780 aa)). 5 coiled-coil regions span residues 449-469 (IEGLDTMLKSLNNIIDDVKRK), 804-838 (VEQNRFQKKQAELLAIRNEEVRRAIEDLYTLVRNY), 1093-1114 (VRNVMAVLKEVREKESEIDNLI), 1275-1297 (DVVEKIDEMGEQVQQYQNQSKKL), and 1699-1727 (KKVDALLRDMVNITVRLDLTKNQRTNLET). AAA stretches follow at residues 1781-2002 (YSFE…VLRT), 2061-2279 (KDAE…ISLK), 2384-2638 (TYPK…VFQG), and 2763-3013 (KFNE…YRRY). ATP-binding positions include 1819–1826 (GPAGTGKT), 2099–2106 (GPSGSGKS), 2425–2432 (GGPGTAKT), and 2802–2809 (GVGGSGKQ). 4 coiled-coil regions span residues 3077–3099 (AKEAEALLKQISESTAIAEKEKQ), 3196–3227 (EAQKMMNQMSFLQDLKDFAKEQINDETVELLE), 3265–3343 (KVVE…LAGE), and 3569–3663 (EDQL…EEYR). Residues 3077 to 3343 (AKEAEALLKQ…NALIGALAGE (267 aa)) are stalk. AAA regions lie at residues 3412–3643 (LVDD…DVSE) and 3857–4071 (AADY…FLQN).

It belongs to the dynein heavy chain family. Consists of at least 3 heavy chains (alpha, beta and gamma), 2 intermediate chains and 8 light chains.

The protein localises to the cell projection. Its subcellular location is the cilium. It localises to the flagellum. It is found in the cytoplasm. The protein resides in the cytoskeleton. The protein localises to the flagellum axoneme. Its function is as follows. Force generating protein of eukaryotic cilia and flagella. Produces force towards the minus ends of microtubules. Dynein has ATPase activity; the force-producing power stroke is thought to occur on release of ADP. In Chlamydomonas reinhardtii (Chlamydomonas smithii), this protein is Dynein gamma chain, flagellar outer arm (ODA2).